The following is a 115-amino-acid chain: Large ribosomal subunit protein bL19 (115 aa).

Belongs to the bacterial ribosomal protein bL19 family.

This protein is located at the 30S-50S ribosomal subunit interface and may play a role in the structure and function of the aminoacyl-tRNA binding site. This chain is Large ribosomal subunit protein bL19, found in Klebsiella pneumoniae (strain 342).